A 393-amino-acid chain; its full sequence is Metal tolerance protein A2 (393 aa).

At 1–72 the chain is on the cytoplasmic side; the sequence is MVTPKLHLDL…EAQERAASMR (72 aa). A helical transmembrane segment spans residues 73 to 93; the sequence is KLLIAVLLCAIFIVVEVVGGI. The Vacuolar portion of the chain corresponds to 94 to 105; the sequence is KANSLAILTDAA. Residues 106–126 form a helical membrane-spanning segment; the sequence is HLLSDVAAFAISLFSLWASGW. At 127-138 the chain is on the cytoplasmic side; sequence KANPQQSYGFFR. The chain crosses the membrane as a helical span at residues 139 to 159; sequence IEILGALVSIQMIWLLAGILV. The Vacuolar segment spans residues 160–176; it reads YEAIVRLNNGSGEVEGS. A helical membrane pass occupies residues 177–197; it reads LMFAVSAVGLLVNIAMAILLG. The segment at 198-233 is required for zinc-binding; sequence HDHGHGHGHSHDNGHGHSHDHGHGIAATEHHHDSGH. Topologically, residues 198-257 are cytoplasmic; that stretch reads HDHGHGHGHSHDNGHGHSHDHGHGIAATEHHHDSGHDESQLSDVLIEQKKQRNVNIQGAY. Residues 202–236 are compositionally biased toward basic and acidic residues; the sequence is HGHGHSHDNGHGHSHDHGHGIAATEHHHDSGHDES. The tract at residues 202–237 is disordered; sequence HGHGHSHDNGHGHSHDHGHGIAATEHHHDSGHDESQ. The helical transmembrane segment at 258–278 threads the bilayer; sequence LHVLGDSIQSVGVMIGGAIIW. Residues 279–284 lie on the Vacuolar side of the membrane; it reads YKPEWK. A helical membrane pass occupies residues 285-305; the sequence is ILDLICTLVFSVIVLGTTIGM. The Cytoplasmic segment spans residues 306–393; that stretch reads LRNILEVLME…SHVTIQIERQ (88 aa).

It belongs to the cation diffusion facilitator (CDF) transporter (TC 2.A.4) family. SLC30A subfamily.

The protein localises to the membrane. In terms of biological role, involved in sequestration of excess zinc in the cytoplasm into vacuoles to maintain zinc homeostasis. The chain is Metal tolerance protein A2 (MTPA2) from Arabidopsis thaliana (Mouse-ear cress).